Reading from the N-terminus, the 141-residue chain is Hemoglobin subunit alpha-D (141 aa).

Positions 1-141 (MLTEDDKQLI…VSAVLAEKYR (141 aa)) constitute a Globin domain. Heme b contacts are provided by H58 and H87.

The protein belongs to the globin family. As to quaternary structure, heterotetramer of two alpha-D chains and two beta chains. In terms of tissue distribution, red blood cells.

In terms of biological role, involved in oxygen transport from the lung to the various peripheral tissues. This is Hemoglobin subunit alpha-D (HBAD) from Chelonoidis niger (Galapagos giant tortoise).